Here is a 338-residue protein sequence, read N- to C-terminus: Lipoate-protein ligase A (338 aa).

Residues 29–216 (PATQRVLFLW…AFFAHYGERV (188 aa)) enclose the BPL/LPL catalytic domain. ATP-binding positions include arginine 71, 76–79 (GAVF), and lysine 134. Lysine 134 serves as a coordination point for (R)-lipoate.

It belongs to the LplA family. As to quaternary structure, monomer.

It is found in the cytoplasm. It carries out the reaction L-lysyl-[lipoyl-carrier protein] + (R)-lipoate + ATP = N(6)-[(R)-lipoyl]-L-lysyl-[lipoyl-carrier protein] + AMP + diphosphate + H(+). The protein operates within protein modification; protein lipoylation via exogenous pathway; protein N(6)-(lipoyl)lysine from lipoate: step 1/2. It functions in the pathway protein modification; protein lipoylation via exogenous pathway; protein N(6)-(lipoyl)lysine from lipoate: step 2/2. In terms of biological role, catalyzes both the ATP-dependent activation of exogenously supplied lipoate to lipoyl-AMP and the transfer of the activated lipoyl onto the lipoyl domains of lipoate-dependent enzymes. The protein is Lipoate-protein ligase A of Salmonella dublin (strain CT_02021853).